The chain runs to 449 residues: C4-dicarboxylate transport protein (449 aa).

8 helical membrane passes run 20-42, 62-84, 91-113, 164-181, 202-224, 239-261, 344-366, and 370-389; these read YLQL…HCYP, IISP…VGTV, AMVY…AHVV, ILQV…LALA, LVQM…TIGK, SFYL…FSGF, LALF…AGFI, and ATLT…ILGV.

The protein belongs to the dicarboxylate/amino acid:cation symporter (DAACS) (TC 2.A.23) family.

The protein localises to the cell inner membrane. In terms of biological role, responsible for the transport of dicarboxylates such as succinate, fumarate, and malate from the periplasm across the inner membrane. The polypeptide is C4-dicarboxylate transport protein (dctA) (Xylella fastidiosa (strain 9a5c)).